We begin with the raw amino-acid sequence, 221 residues long: Pectate lyase C (221 aa).

Residues 1-28 form the signal peptide; it reads MKRLAGTVILSGLLVCGFGQALPEKALA.

It belongs to the polysaccharide lyase 3 family. It depends on Ca(2+) as a cofactor.

The protein resides in the secreted. The catalysed reaction is Eliminative cleavage of (1-&gt;4)-alpha-D-galacturonan to give oligosaccharides with 4-deoxy-alpha-D-galact-4-enuronosyl groups at their non-reducing ends.. The enzyme catalyses Eliminative cleavage of (1-&gt;4)-alpha-D-galacturonan methyl ester to give oligosaccharides with 4-deoxy-6-O-methyl-alpha-D-galact-4-enuronosyl groups at their non-reducing ends.. Its pathway is glycan metabolism; pectin degradation; 2-dehydro-3-deoxy-D-gluconate from pectin: step 2/5. Its function is as follows. Catalyzes the depolymerization of both polygalacturonate and pectins of methyl esterification degree from 22 to 89%, with an endo mode of action. In contrast to the majority of pectate lyases, displays high activity on highly methylated pectins. This Bacillus licheniformis (strain ATCC 14580 / DSM 13 / JCM 2505 / CCUG 7422 / NBRC 12200 / NCIMB 9375 / NCTC 10341 / NRRL NRS-1264 / Gibson 46) protein is Pectate lyase C (pelC).